Consider the following 1182-residue polypeptide: MLNPNDADDSDSSTDSSPPVAVPRPKRSATVSPSTRNSFYNSRRRSDANLNFFNERERQRERRRSMVRASRERSESRRASQQNLRKTNSEPNVDMPSIDVEALQKLLLSIPKFVSASRNRINQRHDSDSGGEMTTEIEELKDAAKSIQSLQRVLAYPSQTSSDRGGNRRLADPVESCLESSVFSDVDESSLATDTIEGRRSGISTRLGHPRGVMQFIPSIRNDQFVPTSEIRRNSISRKSSVPDGFMTSEMESEPVPNVRNRRRGIVDEMFSSSTSLLVDRPSETLAGVNRFAKLLDTFRSRPTSPEQHPSISWNPYVYSDGGEALETCGMEDSLHEADILLWKKRSRASLRRHYSVRHLAARELLDTEKSFVEGLEFLVTKYMRPLRQPLECTLIEASLVDKIFYRIPEILAHHQVLLTTLSQRIDQWHKDAILGDVLLAHFSKQSMIETYISFVDNFKFAKASIIQARQKHAFEKYYNRCCRDHPNKLDLDSLLISPIQRVPRYELIVKQMLKHTPVEHEDRERLLRAQRHIHCLAVAINQHKDGSEQMEQRLREIEAIVDGLDDLVTKDRTLLRHDIITLKGTDRERCIFMLSDLLLVTSVKKKPKVLYSKMSSQSMGFLEGNRFKLLFKVALEDVQISKDTLSQLEEVERKLESSREDDRVLKKMSQLCSLLKCERKVLMEMLETMETSNSMSIRELNEQMSSDPDLSAVHLDVLTSNGFEPFVLEFPNAEKRSVFEAMFKDAKATLAKNLLAAPSCSLKTIIAHQTRPGLQLCTATVVPGKRVDSTPSLWVCASDKFSGQVAVMALDTGEITIESCSAIGNAAVTAMCTVPPPMKLRKRKIKSQKSLEHLLNETIMDINSSGSDTESSSDEGTSTAGQTTVWIGNDDGEVFVVNSTERVRSRARDRLARLRNSITSICAANGNVLVATSYSNQVQLLLFRPASDGSWDLENPQTVGHVCQAPITSMQLIGRRVIIASGNWLHAYFVDTGKFQPPVEILPSSDVITLMYVTGQNVFLCGRKSTEVFVVDVFNLSIINHFNVVSFVRSQLSGREHILREHKMGCLRISCLTVARSHLWIGTSAGCVLSTSVQSARSQPTPDLRVCEIGHSGPCRILLPVHTPSHSNHPSRKQKRSSLNVPAQQSSQLMLVSCGEGLDDGTATQDPSTDAINHLIFWKCS.

Over residues 1–12 the composition is skewed to acidic residues; the sequence is MLNPNDADDSDS. Residues 1–96 form a disordered region; sequence MLNPNDADDS…TNSEPNVDMP (96 aa). The segment covering 29-41 has biased composition (polar residues); it reads ATVSPSTRNSFYN. Residues 69-78 show a composition bias toward basic and acidic residues; that stretch reads ASRERSESRR. The 188-residue stretch at 357–544 folds into the DH domain; that stretch reads VRHLAARELL…HCLAVAINQH (188 aa). Residues 637–669 adopt a coiled-coil conformation; it reads EDVQISKDTLSQLEEVERKLESSREDDRVLKKM. The tract at residues 863–884 is disordered; the sequence is INSSGSDTESSSDEGTSTAGQT. Residues 865–879 show a composition bias toward low complexity; sequence SSGSDTESSSDEGTS. A coiled-coil region spans residues 897 to 922; it reads VVNSTERVRSRARDRLARLRNSITSI.

As to expression, expressed in muscles in the body wall and head, and in the nervous system in neurons including FLP and ASE neurons in the head.

Functionally, probable guanine nucleotide exchange factor which regulates the Rho GTPase rho-1. Functions in ASE sensory neurons where it promotes neuronal degeneration under conditions of oxidative stress. The chain is Rho guanine nucleotide exchange factor osg-1 from Caenorhabditis elegans.